The following is a 206-amino-acid chain: 3-demethoxyubiquinol 3-hydroxylase (206 aa).

Fe cation-binding residues include glutamate 55, glutamate 85, histidine 88, glutamate 137, glutamate 169, and histidine 172.

It belongs to the COQ7 family. Fe cation is required as a cofactor.

Its subcellular location is the cell membrane. It carries out the reaction a 5-methoxy-2-methyl-3-(all-trans-polyprenyl)benzene-1,4-diol + AH2 + O2 = a 3-demethylubiquinol + A + H2O. It participates in cofactor biosynthesis; ubiquinone biosynthesis. Its function is as follows. Catalyzes the hydroxylation of 2-nonaprenyl-3-methyl-6-methoxy-1,4-benzoquinol during ubiquinone biosynthesis. In Azoarcus sp. (strain BH72), this protein is 3-demethoxyubiquinol 3-hydroxylase.